Here is an 843-residue protein sequence, read N- to C-terminus: Histone-lysine N-methyltransferase PRDM9 (843 aa).

The KRAB-related domain maps to 23 to 86 (KVKDEFKDIS…QRQAMKPQIN (64 aa)). Disordered stretches follow at residues 85–104 (INDS…VSPP) and 110–170 (VKHS…KKLK). Cysteine 205, cysteine 208, cysteine 216, and histidine 219 together coordinate Zn(2+). The region spanning 244–358 (PGLRISPSGI…PGCELLVWYG (115 aa)) is the SET domain. S-adenosyl-L-methionine is bound by residues 256–258 (AGL), tyrosine 291, and 320–321 (NC). A substrate-binding site is contributed by 288 to 294 (NSGYSWL). A substrate-binding site is contributed by tyrosine 357. Lysine 368 is subject to N6,N6,N6-trimethyllysine; alternate. N6-methyllysine; alternate is present on lysine 368. N6-methyllysine occurs at positions 372 and 374. A C2H2-type 1 zinc finger spans residues 388 to 411 (HPCLLCSLAFSSQKFLTQHMEWNH). Zn(2+)-binding residues include cysteine 390, cysteine 393, histidine 406, and histidine 411. Residues 418–493 (GTSARINPKP…VEELRTGQTT (76 aa)) form a disordered region. The span at 436 to 454 (QEQHVDSQNKNDKASNEVK) shows a compositional bias: basic and acidic residues. Positions 462-472 (RISTTFPSTLK) are enriched in polar residues. Residues 473-488 (EQMRSEESKRTVEELR) show a composition bias toward basic and acidic residues. The segment at 513 to 531 (QCGQYFSDKSNVNEHQKTH) adopts a C2H2-type 2; degenerate zinc-finger fold. 11 consecutive C2H2-type zinc fingers follow at residues 537-559 (YVCR…QRTH), 565-587 (YVCR…QRTH), 593-615 (YVCR…QRTH), 621-643 (YVCR…QRTH), 649-671 (YVCR…QRTH), 677-699 (YVCR…QRTH), 705-727 (YVCR…QRTH), 733-755 (YVCR…QRTH), 761-783 (YVCR…QRTH), 789-811 (YVCR…QRTH), and 817-839 (YVCR…QRTH). Zn(2+) contacts are provided by cysteine 707, cysteine 710, histidine 723, histidine 727, cysteine 735, cysteine 738, histidine 751, histidine 755, cysteine 763, cysteine 766, histidine 779, histidine 783, cysteine 791, cysteine 794, histidine 807, and histidine 811. A DNA-binding region spans residues 715–805 (TAKSNLIQHQ…RGFTQKSNLI (91 aa)).

It belongs to the class V-like SAM-binding methyltransferase superfamily. Homodimer. Interacts with EHMT2 and CDYL; interaction only takes place when PRDM9 is bound to hotspot DNA. Interacts with CXXC1; this interaction does not link PRDM9-activated recombination hotspot sites with DSB machinery and is not required for the hotspot recognition pathway. Forms a complex with EWSR1, REC8, SYCP3 and SYCP1; complex formation is dependent of phosphorylated form of REC8 and requires PRDM9 bound to hotspot DNA; EWSR1 joins PRDM9 with the chromosomal axis through REC8. Mono-methylated; automethylated. Tri-methylated; automethylated. Mono-methylation is predominant; automethylation is lower and slower than H3 peptide methylation and is in a highest S-adenosyl-L-methionine concentration-dependent. There are two major sites for automethylation at Lys-368 and Lys-374. Lysines can be simultaneously methylated, such as Lys-368(me3)/Lys-372(me1), Lys-368(me1)/Lys-374(me1) and Lys-368(me1)/Lys-372(me1)/Lys-374(me1). Automethylation is an intramolecular (cis) process. Specifically expressed in germ cells entering meiotic prophase in female fetal gonads and in postnatal testis. Expressed in early meiotic prophase.

It localises to the nucleus. The protein localises to the chromosome. The catalysed reaction is L-lysyl-[protein] + S-adenosyl-L-methionine = N(6)-methyl-L-lysyl-[protein] + S-adenosyl-L-homocysteine + H(+). It catalyses the reaction N(6),N(6)-dimethyl-L-lysyl-[protein] + S-adenosyl-L-methionine = N(6),N(6),N(6)-trimethyl-L-lysyl-[protein] + S-adenosyl-L-homocysteine + H(+). The enzyme catalyses L-lysyl(4)-[histone H3] + 3 S-adenosyl-L-methionine = N(6),N(6),N(6)-trimethyl-L-lysyl(4)-[histone H3] + 3 S-adenosyl-L-homocysteine + 3 H(+). It carries out the reaction L-lysyl(36)-[histone H3] + 3 S-adenosyl-L-methionine = N(6),N(6),N(6)-trimethyl-L-lysyl(36)-[histone H3] + 3 S-adenosyl-L-homocysteine + 3 H(+). The catalysed reaction is L-lysyl(9)-[histone H3] + 3 S-adenosyl-L-methionine = N(6),N(6),N(6)-trimethyl-L-lysyl(9)-[histone H3] + 3 S-adenosyl-L-homocysteine + 3 H(+). It catalyses the reaction L-lysyl(20)-[histone H4] + S-adenosyl-L-methionine = N(6)-methyl-L-lysyl(20)-[histone H4] + S-adenosyl-L-homocysteine + H(+). The enzyme catalyses N(6)-methyl-L-lysyl(20)-[histone H4] + S-adenosyl-L-methionine = N(6),N(6)-dimethyl-L-lysyl(20)-[histone H4] + S-adenosyl-L-homocysteine + H(+). Its function is as follows. Histone methyltransferase that sequentially mono-, di-, and tri-methylates both 'Lys-4' (H3K4) and 'Lys-36' (H3K36) of histone H3 to produce respectively trimethylated 'Lys-4' (H3K4me3) and trimethylated 'Lys-36' (H3K36me3) histone H3 and plays a key role in meiotic prophase by determining hotspot localization thereby promoting meiotic recombination. Can also methylate all four core histones with H3 being the best substrate and the most highly modified. Is also able, on one hand, to mono and di-methylate H4K20 and on other hand to trimethylate H3K9 with the di-methylated H3K9 as the best substrate. During meiotic prophase, binds specific DNA sequences through its zinc finger domains thereby determining hotspot localization where it promotes local H3K4me3 and H3K36me3 enrichment on the same nucleosomes through its histone methyltransferase activity. Thereby promotes double-stranded breaks (DSB) formation, at this subset of PRDM9-binding sites, that initiates meiotic recombination for the proper meiotic progression. During meiotic progression hotspot-bound PRDM9 interacts with several complexes; in early leptonema binds CDYL and EHMT2 followed by EWSR1 and CXXC1 by the end of leptonema. EWSR1 joins PRDM9 with the chromosomal axis through REC8. In this way, controls the DSB repair pathway, pairing of homologous chromosomes and sex body formation. Moreover plays a central role in the transcriptional activation of genes during early meiotic prophase thanks to H3K4me3 and H3K36me3 enrichment that represents a specific tag for epigenetic transcriptional activation. In addition performs automethylation. Acetylation and phosphorylation of histone H3 attenuate or prevent histone H3 methylation. This Mus musculus (Mouse) protein is Histone-lysine N-methyltransferase PRDM9.